A 161-amino-acid polypeptide reads, in one-letter code: Nucleotide-binding protein GM21_0633 (161 aa).

This sequence belongs to the YajQ family.

Functionally, nucleotide-binding protein. This Geobacter sp. (strain M21) protein is Nucleotide-binding protein GM21_0633.